The chain runs to 360 residues: uncharacterized protein (360 aa).

3 Solcar repeats span residues Val-34 to Trp-153, Pro-172 to Asn-256, and Asn-266 to Leu-355. 6 helical membrane passes run Val-40–Val-60, Leu-125–Thr-145, Ala-178–Ile-198, Ile-225–Trp-247, Val-269–Phe-289, and Phe-327–Phe-348.

Belongs to the mitochondrial carrier (TC 2.A.29) family.

Its subcellular location is the mitochondrion inner membrane. This is an uncharacterized protein from Caenorhabditis elegans.